Reading from the N-terminus, the 369-residue chain is Mannose-1-phosphate guanylyltransferase catalytic subunit beta (369 aa).

The segment at 12 to 231 is substrate-binding domain; it reads RALILVGGYG…TGFWMDIGQP (220 aa). D120 is a binding site for GDP-alpha-D-mannose. D120 is a Mg(2+) binding site. K171 is an active-site residue. D227 is a GDP-alpha-D-mannose binding site. A Mg(2+)-binding site is contributed by D227. The segment at 254–369 is hexapeptide repeat domain; that stretch reads YTGPGVVGNV…ASVPEPQIIM (116 aa).

It belongs to the transferase hexapeptide repeat family. As to quaternary structure, component of the GMPPA-GMPPB mannose-1-phosphate guanylyltransferase complex composed of 4 Gmppa subunits and 8 Gmppb subunits; the complex is organized into three layers, a central layer made up of 2 Gmppa dimers sandwiched between two layers each made up of 2 Gmppb dimers. Gmppb catalytic activity is reduced when part of the complex and binding of GDP-alpha-D-Mannose by Gmppa induces allosteric feedback inhibition of Gmppb. Mg(2+) is required as a cofactor.

It carries out the reaction alpha-D-mannose 1-phosphate + GTP + H(+) = GDP-alpha-D-mannose + diphosphate. It functions in the pathway nucleotide-sugar biosynthesis; GDP-alpha-D-mannose biosynthesis; GDP-alpha-D-mannose from alpha-D-mannose 1-phosphate (GTP route): step 1/1. With respect to regulation, enzyme activity is reduced by incorporation into the GMPPA-GMPPB mannose-1-phosphate guanylyltransferase complex. Allosterically inhibited, when part of the GMPPA-GMPPB complex, by GDP-alpha-D-mannose binding to Gmppa. Its function is as follows. Catalytic subunit of the GMPPA-GMPPB mannose-1-phosphate guanylyltransferase complex. Catalyzes the formation of GDP-mannose, an essential precursor of glycan moieties of glycoproteins and glycolipids. Can catalyze the reverse reaction in vitro. Together with GMPPA regulates GDP-alpha-D-mannose levels. The sequence is that of Mannose-1-phosphate guanylyltransferase catalytic subunit beta from Drosophila melanogaster (Fruit fly).